Consider the following 367-residue polypeptide: Homoserine O-acetyltransferase (367 aa).

Residues N44–E350 form the AB hydrolase-1 domain. The Nucleophile role is filled by S150. R217 contacts substrate. Active-site residues include D311 and H344. D345 is a binding site for substrate.

This sequence belongs to the AB hydrolase superfamily. MetX family. Homodimer.

Its subcellular location is the cytoplasm. It catalyses the reaction L-homoserine + acetyl-CoA = O-acetyl-L-homoserine + CoA. It participates in amino-acid biosynthesis; L-methionine biosynthesis via de novo pathway; O-acetyl-L-homoserine from L-homoserine: step 1/1. Its function is as follows. Transfers an acetyl group from acetyl-CoA to L-homoserine, forming acetyl-L-homoserine. The polypeptide is Homoserine O-acetyltransferase (Citrifermentans bemidjiense (strain ATCC BAA-1014 / DSM 16622 / JCM 12645 / Bem) (Geobacter bemidjiensis)).